The primary structure comprises 89 residues: Small ribosomal subunit protein bS20 (89 aa).

The span at 1-10 (MKNRSAIKRH) shows a compositional bias: basic residues. The interval 1–30 (MKNRSAIKRHNQSEVRRMRNRSAKSEVRTT) is disordered. Basic and acidic residues predominate over residues 11-30 (NQSEVRRMRNRSAKSEVRTT).

It belongs to the bacterial ribosomal protein bS20 family.

Binds directly to 16S ribosomal RNA. The protein is Small ribosomal subunit protein bS20 of Treponema denticola (strain ATCC 35405 / DSM 14222 / CIP 103919 / JCM 8153 / KCTC 15104).